The primary structure comprises 359 residues: Pyruvate dehydrogenase E1 component subunit beta, mitochondrial (359 aa).

The transit peptide at 1-30 (MAVVAVLVRKPLEQVSGLLRRRFHRTAPAA) directs the protein to the mitochondrion. At tyrosine 67 the chain carries Phosphotyrosine. Glutamate 89 is a binding site for thiamine diphosphate. K(+) contacts are provided by isoleucine 142, alanine 190, isoleucine 191, aspartate 193, and asparagine 195. Lysine 354 bears the N6-acetyllysine mark.

Heterotetramer of two PDHA1 and two PDHB subunits. The heterotetramer interacts with DLAT, and is part of the multimeric pyruvate dehydrogenase complex that contains multiple copies of pyruvate dehydrogenase (E1), dihydrolipoamide acetyltransferase (DLAT, E2) and lipoamide dehydrogenase (DLD, E3). These subunits are bound to an inner core composed of about 48 DLAT and 12 PDHX molecules. Interacts with DLAT. The cofactor is thiamine diphosphate.

The protein resides in the mitochondrion matrix. It catalyses the reaction N(6)-[(R)-lipoyl]-L-lysyl-[protein] + pyruvate + H(+) = N(6)-[(R)-S(8)-acetyldihydrolipoyl]-L-lysyl-[protein] + CO2. Functionally, the pyruvate dehydrogenase complex catalyzes the overall conversion of pyruvate to acetyl-CoA and CO(2), and thereby links the glycolytic pathway to the tricarboxylic cycle. The sequence is that of Pyruvate dehydrogenase E1 component subunit beta, mitochondrial (PDHB) from Bos taurus (Bovine).